We begin with the raw amino-acid sequence, 245 residues long: Lytic switch protein BZLF1 (245 aa).

Residues 1-167 (MMDPNSTSED…RTRKPQQPES (167 aa)) form a transactivation region. Phosphothreonine; by host occurs at positions 14 and 159. The short motif at 157–194 (RRTRKPQQPESLEECDSELEIKRYKNRVASRKCRAKFK) is the Bipartite nuclear localization signal element. Phosphoserine; by host is present on residues Ser-167, Ser-173, and Ser-186. Residues 170–228 (ECDSELEIKRYKNRVASRKCRAKFKQLLQHYREVAAAKSSENDRLRLLLKQMCPSLDVD) enclose the bZIP domain. The segment at 178 to 195 (KRYKNRVASRKCRAKFKQ) is basic motif. Residues 196 to 228 (LLQHYREVAAAKSSENDRLRLLLKQMCPSLDVD) form a leucine-zipper region. Residues 229 to 245 (SIIPRTPDVLHEDLLNF) are accessory activation domain.

The protein belongs to the bZIP family. In terms of assembly, homodimer. Interacts (via b-ZIP domain) with the DNA polymerase processivity factor BMRF1 (via N-terminus); this interaction may inhibit BZLF1-induced transcription of the BMRF1 promoter. Interacts with human UBN1, CRTC2 and RACK1. Interacts (via N-terminus) with human PAX5 (via N-terminus); this interaction inhibits BZLF1-mediated lytic viral reactivation. Interacts (via leucine-zipper domain) with host CEBPA; this interaction induces G1 host cell cycle arrest. Interacts (via C-terminus) with host TP53BP1 (via C-terminus); this interaction is involved in the activation of the viral lytic cycle. Interacts with host chromatin-remodeling ATPase INO80; this interaction participates to the activation of early lytic viral genes by BZLF1. Interacts with host regulator of chromatin SMARCA5/hSNF2H; this interaction participates to the activation of early lytic viral genes by BZLF1. Interacts with host PLSCR1/Phospholipid scramblase 1; this interaction negatively regulates the transcriptional regulatory activity of BZLF1 by preventing the formation of the BZLF1-CBP complex.

Its subcellular location is the host nucleus. In terms of biological role, transcription factor that acts as a molecular switch to induce the transition from the latent to the lytic or productive phase of the virus cycle. Mediates the switch from the latent to the lytic cycle of infection in cells containing a highly methylated viral genome. Probably binds to silenced chromatin and recruits host chromatin-remodeling enzymes. Regulates this switch by binding to 2 types of ZEBRA response elements (ZREs): the CpG-free AP-1 like elements (latency) and the methylated CpG-containing elements (lytic replication). Activates preferentially the methylated forms of the viral lytic R (BRLF1) and Na (BRRF1) gene promoters, the latters being the first genes activated during Z-mediated reactivation in latently infected cells. BZLF1 and BRLF1 act together to trigger lytic replication. Also binds the lytic origin of replication, oriLyt. Induces G1 cell cycle arrest by stabilizing the host CCAAT/enhancer binding protein CEBPA. This function is important because the lytic cycle preferentially takes place in host cells arrested in G1. This Epstein-Barr virus (strain B95-8) (HHV-4) protein is Lytic switch protein BZLF1.